The chain runs to 719 residues: Polyribonucleotide nucleotidyltransferase (719 aa).

Mg(2+) is bound by residues Asp487 and Asp493. The KH domain occupies 554–613; sequence PRIETFKIATDKIREVIGTGGKVIREIVEKTGAKVNIEDDGTVKVASSDGEAMKAAIKWI. The S1 motif domain maps to 623-691; that stretch reads GQIYDGTVVK…DRGKTRLSMK (69 aa). Residues 691 to 719 form a disordered region; the sequence is KVVDQTTGEDLEAKQKDAPAEAPREAAGE. Residues 701–719 are compositionally biased toward basic and acidic residues; that stretch reads LEAKQKDAPAEAPREAAGE.

The protein belongs to the polyribonucleotide nucleotidyltransferase family. Mg(2+) is required as a cofactor.

It localises to the cytoplasm. It catalyses the reaction RNA(n+1) + phosphate = RNA(n) + a ribonucleoside 5'-diphosphate. Its function is as follows. Involved in mRNA degradation. Catalyzes the phosphorolysis of single-stranded polyribonucleotides processively in the 3'- to 5'-direction. This chain is Polyribonucleotide nucleotidyltransferase, found in Bradyrhizobium sp. (strain ORS 278).